The following is a 298-amino-acid chain: Myoblast determination protein 1 homolog (298 aa).

The segment covering 53-73 (PEEHPHTRAPPREPTEEEHVR) has biased composition (basic and acidic residues). A disordered region spans residues 53-77 (PEEHPHTRAPPREPTEEEHVRAPSG). Residues 100-151 (DRRKAATMRERRRLSKVNEAFETLKRCTSTNPNQRLPKVEILRNAIRYIESL) form the bHLH domain. Disordered stretches follow at residues 170-220 (SGES…GKSS) and 242-298 (CPIL…YQVL). 2 stretches are compositionally biased toward polar residues: residues 173-183 (SDASSPRSNCS) and 257-284 (CSPQ…LPQE).

Efficient DNA binding requires dimerization with another bHLH protein. Seems to form active heterodimers with ITF-2.

The protein localises to the nucleus. In terms of biological role, acts as a transcriptional activator that promotes transcription of muscle-specific target genes and plays a role in muscle differentiation. Induces fibroblasts to differentiate into myoblasts. Interacts with and is inhibited by the twist protein. This interaction probably involves the basic domains of both proteins. The chain is Myoblast determination protein 1 homolog (MYOD1) from Gallus gallus (Chicken).